The primary structure comprises 787 residues: ATP-dependent zinc metalloprotease FtsH (787 aa).

The Cytoplasmic segment spans residues 1–5 (MNRKN). A helical transmembrane segment spans residues 6 to 26 (VIRMVTAIAVVVLLGWSFFYF). The Extracellular segment spans residues 27–110 (SDDTRGYKFV…KVTTAVNEGS (84 aa)). The helical transmembrane segment at 111 to 131 (ILGELLVYVLPLLLLVGLFVM) threads the bilayer. Residues 132–787 (FSRMQGGARM…VSPSNPPAHG (656 aa)) lie on the Cytoplasmic side of the membrane. 203–210 (GPPGTGKT) contributes to the ATP binding site. His425 provides a ligand contact to Zn(2+). Residue Glu426 is part of the active site. The Zn(2+) site is built by His429 and Asp501. The interval 616–787 (DFGGRIPSDK…VSPSNPPAHG (172 aa)) is disordered. Composition is skewed to low complexity over residues 650-671 (AFKA…AAQS) and 700-709 (YGAPPGWHAP). Residues 710 to 720 (GWPPQQPPDYW) are compositionally biased toward pro residues. Residues 721-732 (YPPEQQPSQSPY) are compositionally biased toward low complexity. Residues 733–762 (WPQPAPSYPGQAPPPYPSYPPCPSYPPPGQ) are compositionally biased toward pro residues.

It in the central section; belongs to the AAA ATPase family. The protein in the C-terminal section; belongs to the peptidase M41 family. In terms of assembly, homohexamer. Requires Zn(2+) as cofactor.

Its subcellular location is the cell membrane. In terms of biological role, acts as a processive, ATP-dependent zinc metallopeptidase for both cytoplasmic and membrane proteins. Plays a role in the quality control of integral membrane proteins. In Mycobacterium leprae (strain TN), this protein is ATP-dependent zinc metalloprotease FtsH.